A 724-amino-acid chain; its full sequence is Probable zinc transporter MSC2 (724 aa).

Over 1–6 the chain is Cytoplasmic; that stretch reads MNLQEL. A helical transmembrane segment spans residues 7–27; it reads LAKVPLLLSYPTIILSSNLIV. Over 28-58 the chain is Lumenal; that stretch reads PSHNDLISRAASTSAAEYADEKLIFFSTDHA. The helical transmembrane segment at 59-79 threads the bilayer; the sequence is IRLIFLPTFVASSFNLFAHYF. At 80 to 90 the chain is on the cytoplasmic side; the sequence is NFINYSSRRKY. Residues 91-111 form a helical membrane-spanning segment; it reads YVLFTAIYFLSILTAIFHPIQ. Topologically, residues 112–134 are lumenal; it reads STCITLLIIKLLTTADESSPKIA. Residues 135 to 155 form a helical membrane-spanning segment; that stretch reads LNFKTILKTFVPFITLTLVIL. The Cytoplasmic portion of the chain corresponds to 156-174; that stretch reads RWDPSFDASSGDVNKISTS. Residues 175–195 form a helical membrane-spanning segment; the sequence is LAAYALLILTLRYASPLILST. At 196-219 the chain is on the lumenal side; that stretch reads LSSSIGVVSKDTSVAQHSISRNKR. A helical transmembrane segment spans residues 220–240; it reads FPLILVLPIFSFVLLYLMTIV. Over 241-244 the chain is Cytoplasmic; the sequence is NKTY. A helical transmembrane segment spans residues 245–265; the sequence is NIQLLMVFVFFGCLSIFFLSL. Residues 266 to 298 are Lumenal-facing; the sequence is KDLFTEDGNQKKGGQEDEYCRMFDIKYMISYLW. A helical membrane pass occupies residues 299–319; the sequence is LTRFTILLTGIMAIVVHFLSF. Over 320–386 the chain is Cytoplasmic; sequence NEITSSIKTD…KQMALNKDTR (67 aa). A helical transmembrane segment spans residues 387-407; that stretch reads SIFSFLLLNTAFMFVQLLYSF. Residues 408 to 417 lie on the Lumenal side of the membrane; it reads RSKSLGLLSD. Residues 418 to 438 traverse the membrane as a helical segment; that stretch reads SLHMALDCTSLLLGLIAGVLT. Residues 439–453 lie on the Cytoplasmic side of the membrane; sequence KKPASDKFPFGLNYL. A helical membrane pass occupies residues 454-474; it reads GTLAGFTNGVLLLGIVCGIFV. Residues 475–491 are Lumenal-facing; it reads EAIERIFNPIHLHATNE. The helical transmembrane segment at 492-512 threads the bilayer; the sequence is LLVVATLGLLVNLVGLFAFDH. Residues 513–528 are Cytoplasmic-facing; it reads GAHDHGGTDNENMKGI. Residues 529–549 form a helical membrane-spanning segment; the sequence is FLHILADTLGSVGVVISTLLI. Over 550-563 the chain is Lumenal; sequence KLTHWPIFDPIASL. Residues 564–584 form a helical membrane-spanning segment; the sequence is LIGSLILLSALPLLKSTSANI. Residues 585 to 724 lie on the Cytoplasmic side of the membrane; the sequence is LLRLDDKKHN…NSLPLQPIAN (140 aa). A disordered region spans residues 614–653; it reads TPRFWPTESGSSGHSHAHTHSHAENHSHEHHHDQKNGSQE. The segment covering 634 to 648 has biased composition (basic and acidic residues); the sequence is SHAENHSHEHHHDQK.

The protein belongs to the cation diffusion facilitator (CDF) transporter (TC 2.A.4) family. SLC30A subfamily.

It is found in the endoplasmic reticulum membrane. The protein localises to the nucleus membrane. In terms of biological role, probably act as a zinc ion transporter moving zinc from the nucleus/endoplasmic reticulum to the cytoplasm. Involved in zinc ion homeostasis and cellular distribution. The polypeptide is Probable zinc transporter MSC2 (MSC2) (Saccharomyces cerevisiae (strain ATCC 204508 / S288c) (Baker's yeast)).